The chain runs to 65 residues: Large ribosomal subunit protein bL35 (65 aa).

Belongs to the bacterial ribosomal protein bL35 family.

In Acetivibrio thermocellus (strain ATCC 27405 / DSM 1237 / JCM 9322 / NBRC 103400 / NCIMB 10682 / NRRL B-4536 / VPI 7372) (Clostridium thermocellum), this protein is Large ribosomal subunit protein bL35.